We begin with the raw amino-acid sequence, 379 residues long: Carbamoyl phosphate synthase small chain (379 aa).

The CPSase stretch occupies residues 1-189; it reads MSKSALLVLE…GLPEAKDDSE (189 aa). The L-glutamine site is built by serine 47, glycine 241, and glycine 243. The 187-residue stretch at 193-379 folds into the Glutamine amidotransferase type-1 domain; the sequence is HVVAYDFGAK…FIELIKQHSA (187 aa). Cysteine 269 functions as the Nucleophile in the catalytic mechanism. L-glutamine contacts are provided by leucine 270, glutamine 273, asparagine 311, glycine 313, and phenylalanine 314. Active-site residues include histidine 353 and glutamate 355.

Belongs to the CarA family. As to quaternary structure, composed of two chains; the small (or glutamine) chain promotes the hydrolysis of glutamine to ammonia, which is used by the large (or ammonia) chain to synthesize carbamoyl phosphate. Tetramer of heterodimers (alpha,beta)4.

The enzyme catalyses hydrogencarbonate + L-glutamine + 2 ATP + H2O = carbamoyl phosphate + L-glutamate + 2 ADP + phosphate + 2 H(+). It catalyses the reaction L-glutamine + H2O = L-glutamate + NH4(+). It functions in the pathway amino-acid biosynthesis; L-arginine biosynthesis; carbamoyl phosphate from bicarbonate: step 1/1. It participates in pyrimidine metabolism; UMP biosynthesis via de novo pathway; (S)-dihydroorotate from bicarbonate: step 1/3. In terms of biological role, small subunit of the glutamine-dependent carbamoyl phosphate synthetase (CPSase). CPSase catalyzes the formation of carbamoyl phosphate from the ammonia moiety of glutamine, carbonate, and phosphate donated by ATP, constituting the first step of 2 biosynthetic pathways, one leading to arginine and/or urea and the other to pyrimidine nucleotides. The small subunit (glutamine amidotransferase) binds and cleaves glutamine to supply the large subunit with the substrate ammonia. The protein is Carbamoyl phosphate synthase small chain of Vibrio vulnificus (strain YJ016).